The chain runs to 571 residues: MRTSQYLLSTLKETPADAVVISHQLLLRAGMIRRLASGLYTWLPMGLRVLRKVETVVREEMNAAGALEVLMPAVQPAELWQESGRWEQYGPELLRLKDRHEREFCVGPTHEEVITDLARNELNSYKQLPINFYQIQTKFRDEIRPRFGLMRGREFIMKDAYSFHLNQESLQATYDGMYQAYSKIFTRLGLDFRPVQADNGSIGGSGSHEFHVLANSGEDDIVFSDSSDYAANIEKAEAVPRESARGAASEDMRLVDTPDTKTIAALVDGFGLPIEKTIKTLVVHGAEEGTLVALIVRGDHELNEIKAANQPLVASPLVFASEAEIRAAIGAGPGSLGPVNLPIACIVDRSVALMSDFAAGANIEDKHYFGVNWERDLPLPEVADLRNVVEGDPSPDGKGTLVIKRGIEVGHIFQLGTKYSEAMKLSVLSEQGKPVNLIMGCYGIGVSRVVAAAIEQNHDERGILWPSALAPFQIALVPLKYETESVRQATDRLYAELTAAGFEVLLDDRDKKTSPGVKFADMELLGIPHRIVVSDRGLNEGVLEYKGRRDSESQNLPIGELMSFITEKLSR.

It belongs to the class-II aminoacyl-tRNA synthetase family. ProS type 1 subfamily. As to quaternary structure, homodimer.

Its subcellular location is the cytoplasm. It catalyses the reaction tRNA(Pro) + L-proline + ATP = L-prolyl-tRNA(Pro) + AMP + diphosphate. Functionally, catalyzes the attachment of proline to tRNA(Pro) in a two-step reaction: proline is first activated by ATP to form Pro-AMP and then transferred to the acceptor end of tRNA(Pro). As ProRS can inadvertently accommodate and process non-cognate amino acids such as alanine and cysteine, to avoid such errors it has two additional distinct editing activities against alanine. One activity is designated as 'pretransfer' editing and involves the tRNA(Pro)-independent hydrolysis of activated Ala-AMP. The other activity is designated 'posttransfer' editing and involves deacylation of mischarged Ala-tRNA(Pro). The misacylated Cys-tRNA(Pro) is not edited by ProRS. This is Proline--tRNA ligase from Pseudomonas paraeruginosa (strain DSM 24068 / PA7) (Pseudomonas aeruginosa (strain PA7)).